Consider the following 579-residue polypeptide: Isocitrate dehydrogenase kinase/phosphatase (579 aa).

ATP-binding positions include 324-330 (ADGTPGM) and Lys-345. Residue Asp-380 is part of the active site.

This sequence belongs to the AceK family.

Its subcellular location is the cytoplasm. The enzyme catalyses L-seryl-[isocitrate dehydrogenase] + ATP = O-phospho-L-seryl-[isocitrate dehydrogenase] + ADP + H(+). Functionally, bifunctional enzyme which can phosphorylate or dephosphorylate isocitrate dehydrogenase (IDH) on a specific serine residue. This is a regulatory mechanism which enables bacteria to bypass the Krebs cycle via the glyoxylate shunt in response to the source of carbon. When bacteria are grown on glucose, IDH is fully active and unphosphorylated, but when grown on acetate or ethanol, the activity of IDH declines drastically concomitant with its phosphorylation. The sequence is that of Isocitrate dehydrogenase kinase/phosphatase from Xanthomonas euvesicatoria pv. vesicatoria (strain 85-10) (Xanthomonas campestris pv. vesicatoria).